Here is a 168-residue protein sequence, read N- to C-terminus: DAZ-associated protein 2 (168 aa).

Residues 1–13 (MNSKGQYPTQPTY) are compositionally biased toward low complexity. The disordered stretch occupies residues 1–25 (MNSKGQYPTQPTYPVQPPGNPVYPQ). The PPAY motif lies at 39-42 (PPAY). Residue S77 is modified to Phosphoserine.

Interacts with SOX6. Interacts with DAZ1 and DAZL. Interacts with IL17RB. May interact with FAM168B. Interacts with INCA1. Interacts with EIF4G1 and EIF4G2. Interacts (via PPAY motif) with NEDD4 (via WW domains). Interacts with transcription factor TCF4; the interaction results in localization of DAZAP2 to the nucleus. Interacts with transcription factors TCF7 and TCF7L1. Interacts with transcription factor LEF1. Interacts with serine/threonine-protein kinase HIPK2; the interaction results in phosphorylation of DAZAP2 which causes localization of DAZAP2 to the nucleus, reduces interaction of DAZAP2 with HIPK2 and prevents DAZAP2-dependent degradation of HIPK2. Interacts with ubiquitin ligase SIAH1; the interaction is decreased following phosphorylation of DAZAP2 by HIPK2. Interacts with TP53; the interaction is triggered by DNA damage. Ubiquitinated by SMURF2, leading to proteasomal degradation. Ubiquitinated by NEDD4, leading to proteasomal degradation. In terms of processing, following DNA damage, phosphorylated by HIPK2 which promotes DAZAP2 localization to the nucleus, reduces interaction of DAZAP2 with HIPK2 and SIAH1, and prevents DAZAP2-dependent ubiquitination of HIPK2 by E3 ubiquitin-protein ligase SIAH1 and subsequent HIPK2 proteasomal degradation.

It is found in the cytoplasm. The protein localises to the nucleus. Its subcellular location is the nucleus speckle. The protein resides in the nuclear body. It localises to the stress granule. In terms of biological role, in unstressed cells, promotes SIAH1-mediated polyubiquitination and degradation of the serine/threonine-protein kinase HIPK2, probably by acting as a loading factor that potentiates complex formation between HIPK2 and ubiquitin ligase SIAH1. In response to DNA damage, localizes to the nucleus following phosphorylation by HIPK2 and modulates the expression of a subset of TP53/p53 target genes by binding to TP53 at target gene promoters. This limits the expression of a number of cell death-mediating TP53 target genes, reducing DNA damage-induced cell death. Enhances the binding of transcription factor TCF7L2/TCF4, a Wnt signaling pathway effector, to the promoters of target genes. Plays a role in stress granule formation. This chain is DAZ-associated protein 2, found in Rattus norvegicus (Rat).